Reading from the N-terminus, the 984-residue chain is Putative formate dehydrogenase SAV2309 (984 aa).

A 2Fe-2S ferredoxin-type domain is found at 3 to 79 (EHLVVTLDGK…PMTVNTVNND (77 aa)). Positions 37, 48, 51, and 63 each coordinate [2Fe-2S] cluster. In terms of domain architecture, 4Fe-4S His(Cys)3-ligated-type spans 79–119 (DVKDAQKEALDRILEKHMLYCTVCDYNNGDCEIHNTMDAWG). [4Fe-4S] cluster-binding residues include His-95, Cys-99, Cys-102, Cys-109, Cys-147, Cys-150, Cys-153, Cys-157, Cys-190, Cys-193, Cys-196, Cys-200, Cys-264, Cys-267, Cys-271, and Cys-299. 2 4Fe-4S ferredoxin-type domains span residues 138–165 (PFYR…VNET) and 181–211 (NDVP…VNME). The tract at residues 252 to 984 (MRKERIKKTK…YVFPGNQVDK (733 aa)) is formate dehydrogenase. Residues 257–313 (IKKTKTVCTYCGVGCSFEVWTKDREILKVQPSHDSPANKIVTCVKGKFSWGHINSDQ) enclose the 4Fe-4S Mo/W bis-MGD-type domain.

This sequence in the C-terminal section; belongs to the prokaryotic molybdopterin-containing oxidoreductase family. It depends on [2Fe-2S] cluster as a cofactor. Requires [4Fe-4S] cluster as cofactor. Mo-bis(molybdopterin guanine dinucleotide) is required as a cofactor.

The catalysed reaction is formate + NAD(+) = CO2 + NADH. The polypeptide is Putative formate dehydrogenase SAV2309 (Staphylococcus aureus (strain Mu50 / ATCC 700699)).